The sequence spans 112 residues: ATP synthase epsilon chain (112 aa).

The protein belongs to the ATPase epsilon chain family. In terms of assembly, F-type ATPases have 2 components, CF(1) - the catalytic core - and CF(0) - the membrane proton channel. CF(1) has five subunits: alpha(3), beta(3), gamma(1), delta(1), epsilon(1). CF(0) has three main subunits: a, b and c.

The protein resides in the cell inner membrane. In terms of biological role, produces ATP from ADP in the presence of a proton gradient across the membrane. In Rickettsia conorii (strain ATCC VR-613 / Malish 7), this protein is ATP synthase epsilon chain (atpC).